The sequence spans 247 residues: Carboxy-S-adenosyl-L-methionine synthase (247 aa).

S-adenosyl-L-methionine contacts are provided by residues Tyr40, 65-67 (GSS), 90-91 (DN), 122-123 (DI), Asn137, and Arg204.

It belongs to the class I-like SAM-binding methyltransferase superfamily. Cx-SAM synthase family. As to quaternary structure, homodimer.

The catalysed reaction is prephenate + S-adenosyl-L-methionine = carboxy-S-adenosyl-L-methionine + 3-phenylpyruvate + H2O. Its function is as follows. Catalyzes the conversion of S-adenosyl-L-methionine (SAM) to carboxy-S-adenosyl-L-methionine (Cx-SAM). The polypeptide is Carboxy-S-adenosyl-L-methionine synthase (Pseudomonas syringae pv. syringae (strain B728a)).